A 99-amino-acid chain; its full sequence is Aspartyl/glutamyl-tRNA(Asn/Gln) amidotransferase subunit C (99 aa).

The protein belongs to the GatC family. In terms of assembly, heterotrimer of A, B and C subunits.

The enzyme catalyses L-glutamyl-tRNA(Gln) + L-glutamine + ATP + H2O = L-glutaminyl-tRNA(Gln) + L-glutamate + ADP + phosphate + H(+). It carries out the reaction L-aspartyl-tRNA(Asn) + L-glutamine + ATP + H2O = L-asparaginyl-tRNA(Asn) + L-glutamate + ADP + phosphate + 2 H(+). Functionally, allows the formation of correctly charged Asn-tRNA(Asn) or Gln-tRNA(Gln) through the transamidation of misacylated Asp-tRNA(Asn) or Glu-tRNA(Gln) in organisms which lack either or both of asparaginyl-tRNA or glutaminyl-tRNA synthetases. The reaction takes place in the presence of glutamine and ATP through an activated phospho-Asp-tRNA(Asn) or phospho-Glu-tRNA(Gln). This Albidiferax ferrireducens (strain ATCC BAA-621 / DSM 15236 / T118) (Rhodoferax ferrireducens) protein is Aspartyl/glutamyl-tRNA(Asn/Gln) amidotransferase subunit C.